Here is a 1134-residue protein sequence, read N- to C-terminus: MSNSNSKKPVANYAYRQQQDYNGMNAMVGNPMMYHPVDFVNGAGQYGPSQHPAYYTNSPLPNIPPTPFDTAYGASLFPSHLLMGSPFVSSPNMQSGYNSARSSNLKRKAYSRPVSNHNGYNGNSNSNQNNTNNGMVTPSNYYRMGRNSFSRNNNSTRNVTHNNNKGCDTRNNSGRRTFARNNIFDDILPEMLLQRPFCINYKVLPTGDDAYRTRSLLIENVDHSIDLHSIVKNFVKSNTLESAYLIEGGKSDDSKDVETKNLSILISFLTKGDCLNFYNNILQRLSEFKTFLKSEALNLKFVCLNYDPKCLPTFIESEALTENAEEADITNGSTMISASLHHNIANKDATRSIIIEFKSPVEKSDLFKKKLQFLDRSKNKRYILESIDLVNTDVPSNQFPENYAVLTFLNISMAIEVLDYLKKYSKNLGISKCFYVSLAPLVVSSARSSVANIYEGKTSTHRLSVPSVTAGNNNDSNNNGNNNKSNMSGITTLNNNSSIGVSVYGHSNMSLTSLSSSVSLNEEIDMLATKLQGVELDGTYLEINYRDYQTPTIEEHSTHLSNVKISKTTENSRQFSQDIPSPLPLNEHMFMNDSNQSNGAIIPQQLIATPSPVSPNLQMNQRVLPNPITQSLEQNFNVSAKVASSMGSDIGNRTIYIGNINPRSKAEDICNVVRGGILQSIKYIPEKKICFVTFIEAPSAVQFYANSFIDPIVLHGNMLRVGWGHYSGPLPKLISLAVTIGASRNVYVSLPEFAFKEKFIHDPQYKKLHETLSLPDAEQLREDFSTYGDIEQINYLSDSHCCWINFMNISSAISLVEEMNKESTVQNESGEVTLKRATEEKFGGRYKGLLINYGKDRCGNINKNLIAGKNSRFYKKVKRPSYNIRLSKLEEKRRQNEIDEKEKAFDKPLNLESLGISLDAHKDNGGGETGTANNTGHENESELEAENENGNETGSFGGLGLAVASSDVKRATSDETDYEDIFNKSSGSSDSSSDVEVIMHSPSDPEYALKSQTLRSSSQTVINSKRPVKIEDEEEAVGMSQLNYRSSLRQAPPRAPSTLSYNHSKNNETPMQDIFTNGETANNRKKKRGSFARHRTIPGSDVMAQYLAQVQHSTFMYAANILGASAEDNTHPDE.

Ser-2 is subject to N-acetylserine. Disordered regions lie at residues 112–133 (RPVS…NTNN), 151–173 (RNNN…RNNS), and 464–491 (SVPS…SGIT). 2 stretches are compositionally biased toward low complexity: residues 115 to 133 (SNHN…NTNN) and 151 to 164 (RNNN…HNNN). A phosphoserine mark is found at Ser-464 and Ser-467. The span at 471–489 (GNNNDSNNNGNNNKSNMSG) shows a compositional bias: low complexity. The RRM domain maps to 653 to 726 (RTIYIGNINP…NMLRVGWGHY (74 aa)). Disordered regions lie at residues 918–959 (LDAH…FGGL) and 1043–1092 (NYRS…GSFA). Residues 1057 to 1081 (STLSYNHSKNNETPMQDIFTNGETA) are compositionally biased toward polar residues. Residues 1083 to 1092 (NRKKKRGSFA) are compositionally biased toward basic residues.

Its subcellular location is the cytoplasm. In terms of biological role, RNA-binding protein that associates with mRNAs encoding cell wall proteins. This chain is RNA-binding protein NAB6 (NAB6), found in Saccharomyces cerevisiae (strain ATCC 204508 / S288c) (Baker's yeast).